Reading from the N-terminus, the 210-residue chain is Thymidylate kinase (210 aa).

G10–T17 contacts ATP.

It belongs to the thymidylate kinase family.

It catalyses the reaction dTMP + ATP = dTDP + ADP. Functionally, phosphorylation of dTMP to form dTDP in both de novo and salvage pathways of dTTP synthesis. The protein is Thymidylate kinase of Geobacillus sp. (strain WCH70).